Reading from the N-terminus, the 481-residue chain is Heat stress transcription factor A-1b (481 aa).

Positions 1 to 16 (MESVPESVPSPNSNTP) are enriched in low complexity. Residues 1 to 23 (MESVPESVPSPNSNTPSIPPPVN) form a disordered region. A DNA-binding region spans residues 25–119 (VPPFLSKTYD…LLKSIVRRKP (95 aa)). The segment at 138 to 204 (ACVEVGKFGI…QMMSFLAKAV (67 aa)) is hydrophobic repeat HR-A/B. Residues 213 to 227 (LVQQNNNDGNRQIPG) are compositionally biased toward polar residues. Positions 213 to 244 (LVQQNNNDGNRQIPGSNKKRRLPVDEQENRGD) are disordered. The Nuclear localization signal motif lies at 229 to 233 (NKKRR). Over residues 234-243 (LPVDEQENRG) the composition is skewed to basic and acidic residues. Residues 418–427 (DPFWEQFFSV) carry the AHA motif. Positions 467–474 (LTEQMGLL) match the Nuclear export signal motif.

This sequence belongs to the HSF family. Class A subfamily. As to quaternary structure, homotrimer. Binds to HSBP. Exhibits temperature-dependent phosphorylation.

The protein localises to the cytoplasm. It is found in the nucleus. In terms of biological role, transcriptional activator that specifically binds DNA sequence 5'-AGAAnnTTCT-3' known as heat shock promoter elements (HSE). The polypeptide is Heat stress transcription factor A-1b (HSFA1B) (Arabidopsis thaliana (Mouse-ear cress)).